The sequence spans 65 residues: Beta-mammal toxin Tma1 (65 aa).

An LCN-type CS-alpha/beta domain is found at 2-64; the sequence is KEGYLVGNDG…TWNSAKNRCG (63 aa). Intrachain disulfides connect Cys12–Cys63, Cys16–Cys38, Cys24–Cys44, and Cys28–Cys46.

It belongs to the long (4 C-C) scorpion toxin superfamily. Sodium channel inhibitor family. Expressed by the venom gland.

Its subcellular location is the secreted. Beta toxins bind voltage-independently at site-4 of sodium channels (Nav) and shift the voltage of activation toward more negative potentials thereby affecting sodium channel activation and promoting spontaneous and repetitive firing. This toxin acts on human Nav1.4/SCN4A and Nav1.6/SCN8A voltage-gated sodium channels. This chain is Beta-mammal toxin Tma1, found in Tityus macrochirus (Scorpion).